Reading from the N-terminus, the 265-residue chain is Protein Rv2993c (265 aa).

Residues glutamate 114, glutamate 116, and aspartate 145 each contribute to the a divalent metal cation site.

It in the C-terminal section; belongs to the FAH family. A divalent metal cation is required as a cofactor.

This Mycobacterium tuberculosis (strain ATCC 25618 / H37Rv) protein is Protein Rv2993c.